Reading from the N-terminus, the 159-residue chain is G-protein-signaling modulator 3 (159 aa).

The interval 1-54 (MEAERPQEEDGEQSLPQDDQGWPPVNATARPWRSAPPSPPPPGTRHTALGPRSG) is disordered. A phosphoserine mark is found at serine 34, serine 38, serine 55, and serine 58. The segment covering 34–43 (SAPPSPPPPG) has biased composition (pro residues). The residue at position 61 (threonine 61) is a Phosphothreonine. Residues 61 to 83 (TELLLDLVAEAQSRRLEEQRATF) enclose the GoLoco 1 domain. The segment at 77–97 (EEQRATFHTPEAPPNLAPAPP) is disordered. Pro residues predominate over residues 87–97 (EAPPNLAPAPP). GoLoco domains lie at 103 to 125 (KEQL…RSDP) and 131 to 154 (GQEL…RSRP).

The protein resides in the cytoplasm. Its function is as follows. Interacts with subunit of G(i) alpha proteins and regulates the activation of G(i) alpha proteins. In Mus musculus (Mouse), this protein is G-protein-signaling modulator 3 (Gpsm3).